Here is a 265-residue protein sequence, read N- to C-terminus: Small ribosomal subunit protein uS3 (265 aa).

The region spanning valine 39 to arginine 107 is the KH type-2 domain. A disordered region spans residues asparagine 211 to glutamate 265. Residues aspartate 221–glycine 239 show a composition bias toward basic and acidic residues. Residues arginine 240 to alanine 251 show a composition bias toward gly residues.

This sequence belongs to the universal ribosomal protein uS3 family. As to quaternary structure, part of the 30S ribosomal subunit. Forms a tight complex with proteins S10 and S14.

Binds the lower part of the 30S subunit head. Binds mRNA in the 70S ribosome, positioning it for translation. In Cupriavidus necator (strain ATCC 17699 / DSM 428 / KCTC 22496 / NCIMB 10442 / H16 / Stanier 337) (Ralstonia eutropha), this protein is Small ribosomal subunit protein uS3.